The chain runs to 566 residues: Peroxisomal targeting signal receptor (566 aa).

Cys5 participates in a covalent cross-link: Glycyl cysteine thioester (Cys-Gly) (interchain with G-Cter in ubiquitin). The interval 6 to 28 (SVGSNPLAQLNKHAQQNPALRQV) is amphipathic helix 1 (AH1). Lys17 is covalently cross-linked (Glycyl lysine isopeptide (Lys-Gly) (interchain with G-Cter in ubiquitin)). The interval 53-71 (RFQMDQFMNRSPGFSDGQL) is amphipathic helix 2 (AH2). Residues 88–159 (GLKKQDSGSS…IGRPMMHTGI (72 aa)) form a disordered region. Residues 94 to 142 (SGSSNMSAGDTAQHSRSWGNEFNSRSPQQGLASRVNNVERISNTNSMSS) are compositionally biased toward polar residues. The short motif at 111-115 (WGNEF) is the WxxxF/Y motif 1 element. Residues 145–151 (PGMSRIG) form an amphipathic helix 3 (AH3) region. The WxxxF/Y motif 2 signature appears at 187–191 (WNEQF). Residues 225–241 (FQEVWDKLQAETADNNL) are amphipathic helix 4 (AH4). The WxxxF/Y motif 3 signature appears at 248 to 252 (WEKDY). 5 TPR repeats span residues 277–311 (NPNA…DPAH), 312–345 (VDAW…DPTN), 416–449 (PEVQ…NPND), 451–483 (LMWN…KPSF), and 485–517 (RARY…HEVE).

This sequence belongs to the peroxisomal targeting signal receptor family. As to quaternary structure, interacts (via WxxxF/Y and LVxEF motifs) with PEX14; promoting translocation through the PEX13-PEX14 docking complex. Post-translationally, monoubiquitinated at Cys-5 by PEX2 during PEX5 passage through the retrotranslocation channel: monoubiquitination acts as a signal for PEX5 extraction and is required for proper export from peroxisomes and recycling. When PEX5 recycling is compromised, polyubiquitinated at Lys-17 by PEX10 during its passage through the retrotranslocation channel, leading to its degradation.

Its subcellular location is the cytoplasm. It is found in the cytosol. It localises to the peroxisome matrix. Receptor that mediates peroxisomal import of proteins containing a C-terminal PTS1-type tripeptide peroxisomal targeting signal (SKL-type). Binds to cargo proteins containing a PTS1 peroxisomal targeting signal in the cytosol, and translocates them into the peroxisome matrix by passing through the PEX13-PEX14 docking complex along with cargo proteins. PEX5 receptor is then retrotranslocated into the cytosol, leading to release of bound cargo in the peroxisome matrix, and reset for a subsequent peroxisome import cycle. The sequence is that of Peroxisomal targeting signal receptor (PEX5) from Kluyveromyces lactis (strain ATCC 8585 / CBS 2359 / DSM 70799 / NBRC 1267 / NRRL Y-1140 / WM37) (Yeast).